The primary structure comprises 117 residues: Resistin-like gamma (117 aa).

Positions 1-29 are cleaved as a signal peptide; that stretch reads MLTFNKMKTTTCSLLICISLLQLMVPVNT. Disulfide bonds link Cys-61/Cys-114, Cys-73/Cys-113, Cys-82/Cys-99, Cys-84/Cys-101, and Cys-88/Cys-103.

The protein belongs to the resistin/FIZZ family. As to quaternary structure, homodimer. Heterodimer with RETNLB. In terms of tissue distribution, expressed in colon, lung, spleen, pancreas, ileum and bone marrow (at protein level). In colon, found throughout the crypt and surface epithelium, including goblet cells (at protein level). Highest expression is observed in bone marrow, spleen and lung, with lower levels in other tissues. Detected at low levels in granulocytes, but not found in monocytes or lymphocytes. Has very weak expression in white adipose tissue.

The protein localises to the secreted. Probable hormone. Promotes chemotaxis in myeloid cells. This chain is Resistin-like gamma, found in Mus musculus (Mouse).